A 170-amino-acid polypeptide reads, in one-letter code: Cytochrome P450 monooxygenase oryQ (170 aa).

Cys85 serves as a coordination point for heme.

The protein belongs to the cytochrome P450 family. The cofactor is heme.

Its pathway is secondary metabolite biosynthesis. Cytochrome P450 monooxygenase; part of the gene cluster that mediates the biosynthesis of oryzines, natural products with an unusual maleidride backbone. The two subunits of the fungal fatty acid synthase oryfasA and oryfasB probably form octenoic acid. This fatty acid is most likely activated by the acyl-CoA ligase oryP to give octenyl-CoA before the citrate synthase-like protein oryE catalyzes condensation with oxaloacetate to form tricarboxylic acid. The next steps of the pathways are conjectural, but a favorite possible route has been proposed, beginning with decarboxylation and concomitant dehydration by the decarboxylase oryM, followed by tautomerization, which may lead to the production of a diene intermediate. Reduction of this diene intermediate could give the known metabolite piliformic acid. On the pathway to oryzine B and oryzine A, however, hydroxylation of the diene by the alpha-ketoglutarate-dependent dioxygenase oryG and lactonisation by the lactonohydrolases oryH or oryL could give oryzine B directly. Finally, enoyl reduction by the dehydrogenase oryD would then convert oryzine B into oryzine A. The chain is Cytochrome P450 monooxygenase oryQ from Aspergillus oryzae (strain ATCC 42149 / RIB 40) (Yellow koji mold).